The sequence spans 137 residues: Large ribosomal subunit protein uL16 (137 aa).

This sequence belongs to the universal ribosomal protein uL16 family. In terms of assembly, part of the 50S ribosomal subunit.

Its function is as follows. Binds 23S rRNA and is also seen to make contacts with the A and possibly P site tRNAs. The chain is Large ribosomal subunit protein uL16 from Streptococcus equi subsp. zooepidemicus (strain H70).